Consider the following 436-residue polypeptide: Serine--tRNA ligase (436 aa).

Over residues 43–55 (TKSEQLKQKRNEV) the composition is skewed to basic and acidic residues. The tract at residues 43–68 (TKSEQLKQKRNEVSDQIAQAKRNKED) is disordered. An L-serine-binding site is contributed by 237–239 (TAE). 268 to 270 (RSE) is an ATP binding site. Residue Glu-291 participates in L-serine binding. ATP is bound at residue 355-358 (EISS). Ser-390 contributes to the L-serine binding site.

This sequence belongs to the class-II aminoacyl-tRNA synthetase family. Type-1 seryl-tRNA synthetase subfamily. In terms of assembly, homodimer. The tRNA molecule binds across the dimer.

The protein localises to the cytoplasm. The catalysed reaction is tRNA(Ser) + L-serine + ATP = L-seryl-tRNA(Ser) + AMP + diphosphate + H(+). The enzyme catalyses tRNA(Sec) + L-serine + ATP = L-seryl-tRNA(Sec) + AMP + diphosphate + H(+). It participates in aminoacyl-tRNA biosynthesis; selenocysteinyl-tRNA(Sec) biosynthesis; L-seryl-tRNA(Sec) from L-serine and tRNA(Sec): step 1/1. Catalyzes the attachment of serine to tRNA(Ser). Is also able to aminoacylate tRNA(Sec) with serine, to form the misacylated tRNA L-seryl-tRNA(Sec), which will be further converted into selenocysteinyl-tRNA(Sec). This is Serine--tRNA ligase from Lactobacillus johnsonii (strain CNCM I-12250 / La1 / NCC 533).